An 82-amino-acid polypeptide reads, in one-letter code: Sec-independent protein translocase protein TatA (82 aa).

A helical membrane pass occupies residues 1-21 (MGGISIWQLLIIAVIIVLLFG). A disordered region spans residues 48-82 (SAKDAKKDADFVPQNLEKKEAETVEKQKQNDKEQA).

The protein belongs to the TatA/E family. As to quaternary structure, the Tat system comprises two distinct complexes: a TatABC complex, containing multiple copies of TatA, TatB and TatC subunits, and a separate TatA complex, containing only TatA subunits. Substrates initially bind to the TatABC complex, which probably triggers association of the separate TatA complex to form the active translocon.

It is found in the cell inner membrane. In terms of biological role, part of the twin-arginine translocation (Tat) system that transports large folded proteins containing a characteristic twin-arginine motif in their signal peptide across membranes. TatA could form the protein-conducting channel of the Tat system. In Aliivibrio salmonicida (strain LFI1238) (Vibrio salmonicida (strain LFI1238)), this protein is Sec-independent protein translocase protein TatA.